We begin with the raw amino-acid sequence, 355 residues long: Enhancer of mRNA-decapping protein 1 (355 aa).

3 disordered regions span residues 1–146, 210–230, and 301–330; these read MSSD…VDGM, MSQP…SQPM, and NSTA…KSSQ. Residues 39–49 show a composition bias toward polar residues; sequence AQKQQLPNGEQ. The span at 57–67 shows a compositional bias: basic residues; sequence KQSRKRGSGRQ. Over residues 91 to 110 the composition is skewed to polar residues; it reads SIPSGSAGSESAQKETSAGQ. Over residues 123 to 142 the composition is skewed to low complexity; that stretch reads VPAGGPAGKSSSEPASASSA.

The protein belongs to the EDC family.

It is found in the cytoplasm. Its function is as follows. mRNA-binding protein which stimulates mRNA decapping. The chain is Enhancer of mRNA-decapping protein 1 (EDC1) from Eremothecium gossypii (strain ATCC 10895 / CBS 109.51 / FGSC 9923 / NRRL Y-1056) (Yeast).